Consider the following 251-residue polypeptide: Flap endonuclease Xni (251 aa).

Position 104 (D104) interacts with Mg(2+). The region spanning 160–249 (VQPQQLPDYW…IDGNLQQLRL (90 aa)) is the 5'-3' exonuclease domain. K(+) contacts are provided by L171, A172, P180, V182, and I185. Residues 184–189 (GIGPKS) are interaction with DNA.

Belongs to the Xni family. Requires Mg(2+) as cofactor. K(+) is required as a cofactor.

Has flap endonuclease activity. During DNA replication, flap endonucleases cleave the 5'-overhanging flap structure that is generated by displacement synthesis when DNA polymerase encounters the 5'-end of a downstream Okazaki fragment. The protein is Flap endonuclease Xni of Shigella flexneri serotype 5b (strain 8401).